The following is a 105-amino-acid chain: Small ribosomal subunit protein uS10 (105 aa).

Belongs to the universal ribosomal protein uS10 family. As to quaternary structure, part of the 30S ribosomal subunit.

Functionally, involved in the binding of tRNA to the ribosomes. In Crocosphaera subtropica (strain ATCC 51142 / BH68) (Cyanothece sp. (strain ATCC 51142)), this protein is Small ribosomal subunit protein uS10.